Reading from the N-terminus, the 365-residue chain is Class E basic helix-loop-helix protein 22 (365 aa).

3 disordered regions span residues 34–93 (AFRS…GGGG), 134–156 (GRGSVAESSGGEQSPDDDSDGRC), and 188–225 (HLHGGAGLPPGGSTGSGGGGSGGGGGGGSSSKKSKEQK). The segment covering 82–93 (GGGGAGGGGGGG) has biased composition (gly residues). The segment covering 191–216 (GGAGLPPGGSTGSGGGGSGGGGGGGS) has biased composition (gly residues). The region spanning 226–280 (ALRLNINARERRRMHDLNDALDELRAVIPYAHSPSVRKLSKIATLLLAKNYILMQ) is the bHLH domain.

As to quaternary structure, heterodimer with other bHLH proteins, like TCF3/E47. Kidney, lung, brain and pancreas (insulinoma).

It is found in the nucleus. In terms of biological role, inhibits DNA binding of TCF3/E47 homodimers and TCF3 (E47)/NEUROD1 heterodimers and acts as a strong repressor of Neurod1 and Myod-responsive genes, probably by heterodimerization with class a basic helix-loop-helix factors. Despite the presence of an intact basic domain, does not bind to DNA. This is Class E basic helix-loop-helix protein 22 (BHLHE22) from Mesocricetus auratus (Golden hamster).